The primary structure comprises 142 residues: Large ribosomal subunit protein uL13 (142 aa).

It belongs to the universal ribosomal protein uL13 family. As to quaternary structure, part of the 50S ribosomal subunit.

Its function is as follows. This protein is one of the early assembly proteins of the 50S ribosomal subunit, although it is not seen to bind rRNA by itself. It is important during the early stages of 50S assembly. The polypeptide is Large ribosomal subunit protein uL13 (Leptothrix cholodnii (strain ATCC 51168 / LMG 8142 / SP-6) (Leptothrix discophora (strain SP-6))).